Here is a 436-residue protein sequence, read N- to C-terminus: UPF0597 protein YhaM (436 aa).

The protein belongs to the UPF0597 family.

The chain is UPF0597 protein YhaM from Escherichia coli O6:H1 (strain CFT073 / ATCC 700928 / UPEC).